The sequence spans 126 residues: Large ribosomal subunit protein eL14 (126 aa).

The protein belongs to the eukaryotic ribosomal protein eL14 family.

This is Large ribosomal subunit protein eL14 (RPL14) from Tetrahymena thermophila (strain SB210).